The sequence spans 184 residues: ATP-dependent protease subunit HslV (184 aa).

Residue Thr-12 is part of the active site. Na(+)-binding residues include Ala-166, Cys-169, and Thr-172.

This sequence belongs to the peptidase T1B family. HslV subfamily. A double ring-shaped homohexamer of HslV is capped on each side by a ring-shaped HslU homohexamer. The assembly of the HslU/HslV complex is dependent on binding of ATP.

Its subcellular location is the cytoplasm. It carries out the reaction ATP-dependent cleavage of peptide bonds with broad specificity.. Its activity is regulated as follows. Allosterically activated by HslU binding. Protease subunit of a proteasome-like degradation complex believed to be a general protein degrading machinery. This chain is ATP-dependent protease subunit HslV, found in Nitrobacter winogradskyi (strain ATCC 25391 / DSM 10237 / CIP 104748 / NCIMB 11846 / Nb-255).